A 210-amino-acid chain; its full sequence is Probable GTP-binding protein EngB (210 aa).

The EngB-type G domain maps to 30–204 (QGYEVAFAGR…YRVLADWMEL (175 aa)). Residues 38–45 (GRSNAGKS), 64–68 (GRTQL), 82–85 (DLPG), 149–152 (TKAD), and 182–185 (LFSA) each bind GTP. The Mg(2+) site is built by Ser45 and Thr66.

Belongs to the TRAFAC class TrmE-Era-EngA-EngB-Septin-like GTPase superfamily. EngB GTPase family. It depends on Mg(2+) as a cofactor.

Functionally, necessary for normal cell division and for the maintenance of normal septation. This is Probable GTP-binding protein EngB from Pseudomonas putida (strain ATCC 47054 / DSM 6125 / CFBP 8728 / NCIMB 11950 / KT2440).